Consider the following 282-residue polypeptide: MQIVNISAYKFVSLDDIETLRPAMRERCEAAGLKGTILLAPEGINMFLAGPRAAIDGFMDWLHADARFADIAPKESLSENQPFKRMLVRAKKEIITMKMPLIRPEEGRAPSVRPAELKRWLDQGHDDEGRPVVMLDTRNDFEVAVGTFEDAVEYDIAKFSEFPEAVAAHKAELEGKTVVSFCTGGIRCEKAAIHMQEVGVERVYQLEGGILKYFEEVGGSHYRGDCFVFDYRTALNPNLEPAGPKQCFACRAVVTPQEQQSPHYVVGKSCPHCIGSKDQAAA.

In terms of domain architecture, Rhodanese spans 128-222 (EGRPVVMLDT…YFEEVGGSHY (95 aa)). Cys182 acts as the Cysteine persulfide intermediate in catalysis.

The protein belongs to the TrhO family.

It carries out the reaction uridine(34) in tRNA + AH2 + O2 = 5-hydroxyuridine(34) in tRNA + A + H2O. Catalyzes oxygen-dependent 5-hydroxyuridine (ho5U) modification at position 34 in tRNAs. This is tRNA uridine(34) hydroxylase from Cupriavidus necator (strain ATCC 17699 / DSM 428 / KCTC 22496 / NCIMB 10442 / H16 / Stanier 337) (Ralstonia eutropha).